The following is a 1391-amino-acid chain: MNLLNLFNPLQTAGMEEEFDAIKIGIASPETIRSWSYGEVKKPETINYRTFKPERDGLFCAKIFGPVKDYECLCGKYKRLKFKGVTCEKCGVEVTLSKVRRERMGHIELAAPVAHIWFLKSLPSRLGMVLNMTLRDIERVLYFEAFVVTDPGMTPLQRRQLLTEDDYYNKLDEYGDDFDAKMGAEGIRELLRTLDVAGEIEILRQELESTGSDTKIKKIAKRLKVLEAFHRSGMKLEWMIMDVLPVLPPDLRPLVPLDGGRFATSDLNDLYRRVINRNNRLKRLLELHAPDIIVRNEKRMLQEAVDSLLDNGRRGKAMTGANKRPLKSLADMIKGKGGRFRQNLLGKRVDYSGRSVITVGPYLRLHQCGLPKKMALELFKPFIFHKLEKQGLASTVKAAKKLVEQEVPEVWDILEEVIREHPIMLNRAPTLHRLGIQAFEPILIEGKAIQLHPLVCAAFNADFDGDQMAVHVPLSLEAQMEARTLMLASNNVLSPANGEPIIVPSQDIVLGLYYMTRDRINAKGEGSLFADVKEVHRAYHTKQVELGTKITVRLREWVKNEAGEFEPVVNRYETTVGRALLSEILPKGLPFEYVNKALKKKEISKLINASFRLCGLRDTVIFADHLMYTGFGFAAKGGISIAVDDMEIPKEKAALLAEANAEVKEIEDQYRQGLVTNGERYNKVVDIWGRAGDKIAKAMMDNLSKQKVIDRDGNEVDQESFNSIYMMADSGARGSAAQIKQLSGMRGLMAKPDGSIIETPITSNFREGLTVLQYFIATHGARKGLADTALKTANSGYLTRRLVDVTQDLVVVEDDCGTSDGFVMKAVVQGGDVIEALRDRILGRVTASDVVDPSSGETLVEAGTLLTEKLVDMIDQSGVDEVKVRTPITCKTRHGLCAHCYGRDLARGKLVNAGEAVGVIAAQSIGEPGTQLTMRTFHIGGAASRAAAASQVEAKSNGTARFSSQMRYVANNKGELVVIGRSCEVVIHDDIGRERERHKVPYGAILLVQDGMAIKAGQTLATWDPHTRPMITEHAGMVKFENMEEGVTVAKQTDDVTGLSALVVIDGKRRSSSASKLLRPTVKLLDENGVEICIPGTSTPVSMAFPVGAVITVREGQEIGKGDVLARIPQASSKTRDITGGLPRVAELFEARVPKDAGMLAEITGTVSFGKETKGKQRLIITDVDGVAYETLISKEKQILVHDGQVVNRGETIVDGAVDPHDILRLQGIEALARYIVQEVQEVYRLQGVKISDKHIEVIIRQMLRRVNIADAGETGFITGEQVERGDMMAANEKALEEGKEPARYENILLGITKASLSTDSFISAASFQETTRVLTEAAIMGKQDELRGLKENVIVGRLIPAGTGLTYHRSRHQQWQGVEQETAETQVTDE.

Residues cysteine 72, cysteine 74, cysteine 87, and cysteine 90 each coordinate Zn(2+). 3 residues coordinate Mg(2+): aspartate 462, aspartate 464, and aspartate 466. 4 residues coordinate Zn(2+): cysteine 816, cysteine 890, cysteine 897, and cysteine 900.

Belongs to the RNA polymerase beta' chain family. The RNAP catalytic core consists of 2 alpha, 1 beta, 1 beta' and 1 omega subunit. When a sigma factor is associated with the core the holoenzyme is formed, which can initiate transcription. Mg(2+) serves as cofactor. Requires Zn(2+) as cofactor.

The enzyme catalyses RNA(n) + a ribonucleoside 5'-triphosphate = RNA(n+1) + diphosphate. Its function is as follows. DNA-dependent RNA polymerase catalyzes the transcription of DNA into RNA using the four ribonucleoside triphosphates as substrates. The polypeptide is DNA-directed RNA polymerase subunit beta' (Neisseria gonorrhoeae (strain NCCP11945)).